We begin with the raw amino-acid sequence, 112 residues long: Large ribosomal subunit protein eL30y (112 aa).

Belongs to the eukaryotic ribosomal protein eL30 family.

This is Large ribosomal subunit protein eL30y (RPL30B) from Arabidopsis thaliana (Mouse-ear cress).